Here is an 833-residue protein sequence, read N- to C-terminus: Leucine--tRNA ligase (833 aa).

A 'HIGH' region motif is present at residues 41 to 52; the sequence is PYPSGAGLHVGH. The 'KMSKS' region motif lies at 610 to 614; that stretch reads KMSKS. Lysine 613 serves as a coordination point for ATP.

Belongs to the class-I aminoacyl-tRNA synthetase family.

The protein localises to the cytoplasm. It catalyses the reaction tRNA(Leu) + L-leucine + ATP = L-leucyl-tRNA(Leu) + AMP + diphosphate. This is Leucine--tRNA ligase from Streptococcus mutans serotype c (strain ATCC 700610 / UA159).